Reading from the N-terminus, the 806-residue chain is Ribonucleoside-diphosphate reductase large subunit-like protein (806 aa).

It belongs to the ribonucleoside diphosphate reductase large chain family.

The protein resides in the virion. It localises to the host cytoplasm. Its function is as follows. Does not possess a ribonucleotide reductase activity. Betaherpesviruses probably use another strategy to expand the dNTP pool in a quiescent host cell. The protein is Ribonucleoside-diphosphate reductase large subunit-like protein of Human herpesvirus 7 (strain JI) (HHV-7).